The primary structure comprises 1022 residues: Sodium/potassium-transporting ATPase subunit alpha (1022 aa).

Residues 1–5 (MGKGA) constitute a propeptide that is removed on maturation. Residues 1-34 (MGKGAASEKYQPAATSENAKNSKKSKSKTTDLDE) are disordered. The Cytoplasmic segment spans residues 6-87 (ASEKYQPAAT…NALTPPPTTP (82 aa)). Position 16 is a phosphoserine; by PKC (S16). The interval 82–84 (PPP) is interaction with phosphoinositide-3 kinase. Residues 88-108 (EWIKFCRQLFGGFSILLWTGA) form a helical membrane-spanning segment. At 109-131 (ILCFLAYGIQVATVDNPANDNLY) the chain is on the lumenal side. A helical membrane pass occupies residues 132 to 152 (LGVVLSTVVIITGCFSYYQEA). At 153-288 (KSSKIMDSFK…VGQTPIAAEI (136 aa)) the chain is on the cytoplasmic side. Positions 215-235 (NSSLTGESEPQSRSPEYSSEN) are disordered. Residues 289-308 (EHFIHIITGVAVFLGVSFFI) form a helical membrane-spanning segment. Topologically, residues 309–320 (LSLILGYTWLEA) are lumenal. The helical transmembrane segment at 321-338 (VIFLIGIIVANVPEGLLA) threads the bilayer. At 339 to 771 (TVTVCLTLTA…EEGRLIFDNL (433 aa)) the chain is on the cytoplasmic side. The active-site 4-aspartylphosphate intermediate is the D376. 2 residues coordinate Mg(2+): D716 and D720. The helical transmembrane segment at 772–791 (KKSIAYTLTSNIPEITPFLV) threads the bilayer. At 792–801 (FIIANVPLPL) the chain is on the lumenal side. Residues 802-822 (GTVTILCIDLGTDMVPAISLA) traverse the membrane as a helical segment. The Cytoplasmic portion of the chain corresponds to 823–842 (YERAESDIMKRQPRNPKTDK). A helical transmembrane segment spans residues 843 to 865 (LVNERLISMAYGQIGMIQALGGF). The Lumenal portion of the chain corresponds to 866-917 (FSYFVILAENGFLPIDLIGIREKWDELWTQDLEDSYGQQWTYEQRKIVEYTC). The chain crosses the membrane as a helical span at residues 918 to 937 (HTSFFVSIVIVQWADLIICK). The Cytoplasmic portion of the chain corresponds to 938-950 (TRRNSIFQQGMKN). Residue S942 is modified to Phosphoserine; by PKA. Residues 951–969 (KILIFGLFEETALAAFLSY) traverse the membrane as a helical segment. Residues 970–984 (TPGTDIALRMYPLKP) are Lumenal-facing. A helical membrane pass occupies residues 985-1005 (SWWFCAFPYSLIIFLYDEARR). Topologically, residues 1006–1022 (FILRRNPGGWVEQETYY) are cytoplasmic.

It belongs to the cation transport ATPase (P-type) (TC 3.A.3) family. Type IIC subfamily. In terms of assembly, the sodium/potassium-transporting ATPase is composed of a catalytic alpha subunit, an auxiliary non-catalytic beta subunit and an additional regulatory subunit.

The protein localises to the cell membrane. It carries out the reaction K(+)(out) + Na(+)(in) + ATP + H2O = K(+)(in) + Na(+)(out) + ADP + phosphate + H(+). Its function is as follows. This is the catalytic component of the active enzyme, which catalyzes the hydrolysis of ATP coupled with the exchange of sodium and potassium ions across the plasma membrane. This action creates the electrochemical gradient of sodium and potassium ions, providing the energy for active transport of various nutrients. The chain is Sodium/potassium-transporting ATPase subunit alpha from Tetronarce californica (Pacific electric ray).